The sequence spans 122 residues: Large ribosomal subunit protein uL18 (122 aa).

It belongs to the universal ribosomal protein uL18 family. As to quaternary structure, part of the 50S ribosomal subunit; part of the 5S rRNA/L5/L18/L25 subcomplex. Contacts the 5S and 23S rRNAs.

This is one of the proteins that bind and probably mediate the attachment of the 5S RNA into the large ribosomal subunit, where it forms part of the central protuberance. This chain is Large ribosomal subunit protein uL18, found in Desulfatibacillum aliphaticivorans.